Here is a 93-residue protein sequence, read N- to C-terminus: Signal recognition particle 19 kDa protein (93 aa).

It belongs to the SRP19 family. As to quaternary structure, part of the signal recognition particle protein translocation system, which is composed of SRP and FtsY. Archaeal SRP consists of a 7S RNA molecule of 300 nucleotides and two protein subunits: SRP54 and SRP19.

The protein resides in the cytoplasm. Functionally, involved in targeting and insertion of nascent membrane proteins into the cytoplasmic membrane. Binds directly to 7S RNA and mediates binding of the 54 kDa subunit of the SRP. The polypeptide is Signal recognition particle 19 kDa protein (Haloquadratum walsbyi (strain DSM 16790 / HBSQ001)).